A 216-amino-acid polypeptide reads, in one-letter code: Adenylate kinase (216 aa).

10 to 15 (GAGKGT) is an ATP binding site. Positions 30–59 (STGDMLRAAVSAQTEVGKRAKAVMDAGKLV) are NMP. Residues T31, R36, 57–59 (KLV), 85–88 (GFPR), and Q92 contribute to the AMP site. The interval 126–163 (GRYTCANCGTGYHDENLKPKVEGVCDKCGSTHFKRRPD) is LID. Position 127 (R127) interacts with ATP. Zn(2+) is bound by residues C130, C133, C150, and C153. AMP contacts are provided by R160 and R172. An ATP-binding site is contributed by A200.

This sequence belongs to the adenylate kinase family. As to quaternary structure, monomer.

It is found in the cytoplasm. The enzyme catalyses AMP + ATP = 2 ADP. It participates in purine metabolism; AMP biosynthesis via salvage pathway; AMP from ADP: step 1/1. Its function is as follows. Catalyzes the reversible transfer of the terminal phosphate group between ATP and AMP. Plays an important role in cellular energy homeostasis and in adenine nucleotide metabolism. The sequence is that of Adenylate kinase from Allorhizobium ampelinum (strain ATCC BAA-846 / DSM 112012 / S4) (Agrobacterium vitis (strain S4)).